The following is a 225-amino-acid chain: Glutathione s-transferase kappa 2 (225 aa).

Glutathione contacts are provided by residues 15-17 (SPY), asparagine 52, and 200-201 (SD).

It belongs to the GST superfamily. Kappa family. Expressed in the pharynx, body wall muscles and epidermis. Weaker expression is seen in the intestine.

The protein localises to the mitochondrion. The catalysed reaction is RX + glutathione = an S-substituted glutathione + a halide anion + H(+). Functionally, has roles in respiratory and lipid metabolism. In Caenorhabditis elegans, this protein is Glutathione s-transferase kappa 2 (gstk-2).